A 144-amino-acid chain; its full sequence is Maximins 3/H11 type 1 (144 aa).

The N-terminal stretch at 1 to 18 (MNFKYIVAVSFLIASAYA) is a signal peptide. Propeptides lie at residues 19–43 (RSVQ…REIR) and 73–122 (RTAE…KKEK). Ile143 is subject to Isoleucine amide.

This sequence belongs to the bombinin family. Expressed by the skin glands.

The protein localises to the secreted. In terms of biological role, maximin-3 shows antibacterial activity against both Gram-positive and Gram-negative bacteria. It also shows antimicrobial activity against the fungus C.albicans, but not against A.flavus nor P.uticale. It has little hemolytic activity. It possess a significant cytotoxicity against tumor cell lines. It possess a significant anti-HIV activity. It shows high spermicidal activity. Its function is as follows. Maximin-H11 shows antimicrobial activity against bacteria and against the fungus C.albicans. Shows strong hemolytic activity. The sequence is that of Maximins 3/H11 type 1 from Bombina maxima (Giant fire-bellied toad).